The sequence spans 89 residues: Putative defensin-like protein 230 (89 aa).

A signal peptide spans 1-26 (MRSVIWFIVSYTLMLLVLRGGKEVEA). 4 disulfide bridges follow: Cys30–Cys84, Cys40–Cys65, Cys48–Cys78, and Cys63–Cys80.

The protein belongs to the DEFL family.

Its subcellular location is the secreted. The chain is Putative defensin-like protein 230 (SCRL24) from Arabidopsis thaliana (Mouse-ear cress).